Consider the following 223-residue polypeptide: Superoxide dismutase [Mn], mitochondrial (223 aa).

A mitochondrion-targeting transit peptide spans 1-24 (MNLIIGVAGRLLVGKNYCLNTQRL). Residues H50, H98, D184, and H188 each contribute to the Mn(2+) site.

This sequence belongs to the iron/manganese superoxide dismutase family. In terms of assembly, homotetramer. It depends on Mn(2+) as a cofactor.

Its subcellular location is the mitochondrion matrix. It carries out the reaction 2 superoxide + 2 H(+) = H2O2 + O2. Destroys superoxide anion radicals which are normally produced within the cells and which are toxic to biological systems. The protein is Superoxide dismutase [Mn], mitochondrial (sod-2) of Onchocerca volvulus.